Consider the following 391-residue polypeptide: 3-ketoacyl-CoA thiolase, peroxisomal (391 aa).

Catalysis depends on Cys-92, which acts as the Acyl-thioester intermediate. Active-site proton acceptor residues include His-335 and Cys-366.

The protein belongs to the thiolase-like superfamily. Thiolase family. In terms of assembly, homodimer.

Its subcellular location is the peroxisome. It carries out the reaction an acyl-CoA + acetyl-CoA = a 3-oxoacyl-CoA + CoA. It functions in the pathway lipid metabolism; fatty acid metabolism. This Encephalitozoon cuniculi (strain GB-M1) (Microsporidian parasite) protein is 3-ketoacyl-CoA thiolase, peroxisomal (FOX3).